The primary structure comprises 833 residues: Interleukin enhancer-binding factor 3 homolog (833 aa).

The DZF domain maps to 11-379; it reads RIFVNDDRHV…PMKRPIEEES (369 aa). Disordered stretches follow at residues 65-86 and 339-403; these read VNAL…GEQA and DPLP…KAEP. At T70 the chain carries Phosphothreonine. Residues 373-385 show a composition bias toward basic and acidic residues; the sequence is RPIEEESTDEKNP. 2 consecutive DRBM domains span residues 402–471 and 527–593; these read EPAQ…DMGL and HGKN…KLFP. 3 disordered regions span residues 597-651, 702-762, and 775-833; these read NSEV…FNQG, QSDS…GGGA, and AYPS…YQYR. The span at 629–639 shows a compositional bias: basic residues; it reads GRGRGRGRGRG. A compositionally biased stretch (gly residues) spans 640 to 651; that stretch reads RGFNNGGGFNQG. Over residues 775-818 the composition is skewed to polar residues; that stretch reads AYPSQVTGGQEYNYEGYSNQSNYNSQGGANQNFGGNSAPYNSGQ.

The protein resides in the nucleus. It is found in the nucleolus. It localises to the cytoplasm. Functionally, RNA-binding protein that plays an essential role in the biogenesis of circular RNAs (circRNAs) which are produced by back-splicing circularization of pre-mRNAs. Within the nucleus, promotes circRNAs processing by stabilizing the regulatory elements residing in the flanking introns of the circularized exons. Plays thereby a role in the back-splicing of a subset of circRNAs. As a consequence, participates in a wide range of transcriptional and post-transcriptional processes. Binds to poly-U elements and AU-rich elements (AREs) in the 3'-UTR of target mRNAs. Upon viral infection, ILF3 accumulates in the cytoplasm and participates in the innate antiviral response. Mechanistically, ILF3 becomes phosphorylated and activated by the double-stranded RNA-activated protein kinase/PKR which releases ILF3 from cellular mature circRNAs. In turn, unbound ILF3 molecules are able to interact with and thus inhibit viral mRNAs. The chain is Interleukin enhancer-binding factor 3 homolog (ilf3) from Danio rerio (Zebrafish).